A 255-amino-acid polypeptide reads, in one-letter code: Taurine import ATP-binding protein TauB (255 aa).

One can recognise an ABC transporter domain in the interval 2 to 229 (LQISHLYADY…RFVAGESSRS (228 aa)). 34–41 (GPSGCGKT) is an ATP binding site.

This sequence belongs to the ABC transporter superfamily. Taurine importer (TC 3.A.1.17.1) family. In terms of assembly, the complex is composed of two ATP-binding proteins (TauB), two transmembrane proteins (TauC) and a solute-binding protein (TauA).

It is found in the cell inner membrane. It catalyses the reaction taurine(out) + ATP + H2O = taurine(in) + ADP + phosphate + H(+). In terms of biological role, part of the ABC transporter complex TauABC involved in taurine import. Responsible for energy coupling to the transport system. The polypeptide is Taurine import ATP-binding protein TauB (Escherichia coli O157:H7).